The following is a 58-amino-acid chain: Large ribosomal subunit protein uL30 (58 aa).

This sequence belongs to the universal ribosomal protein uL30 family. Part of the 50S ribosomal subunit.

The polypeptide is Large ribosomal subunit protein uL30 (Pelobacter propionicus (strain DSM 2379 / NBRC 103807 / OttBd1)).